The sequence spans 314 residues: tRNA-cytidine(32) 2-sulfurtransferase (314 aa).

Positions 58-63 match the PP-loop motif motif; sequence SGGKDS. Residues cysteine 133, cysteine 136, and cysteine 224 each contribute to the [4Fe-4S] cluster site.

It belongs to the TtcA family. Homodimer. The cofactor is Mg(2+). [4Fe-4S] cluster is required as a cofactor.

Its subcellular location is the cytoplasm. It catalyses the reaction cytidine(32) in tRNA + S-sulfanyl-L-cysteinyl-[cysteine desulfurase] + AH2 + ATP = 2-thiocytidine(32) in tRNA + L-cysteinyl-[cysteine desulfurase] + A + AMP + diphosphate + H(+). The protein operates within tRNA modification. Functionally, catalyzes the ATP-dependent 2-thiolation of cytidine in position 32 of tRNA, to form 2-thiocytidine (s(2)C32). The sulfur atoms are provided by the cysteine/cysteine desulfurase (IscS) system. This Polaromonas naphthalenivorans (strain CJ2) protein is tRNA-cytidine(32) 2-sulfurtransferase.